The chain runs to 510 residues: Protein phosphatase EYA3 (510 aa).

Disordered stretches follow at residues 1 to 32 and 175 to 233; these read MQEP…SNLS and YQTE…DASS. Positions 7 to 16 are enriched in polar residues; the sequence is QTLSQVNNPD. Residues 192-203 show a composition bias toward low complexity; sequence LPSDSSASPPLS. Residues S199 and S203 each carry the phosphoserine modification. D246 acts as the Nucleophile in catalysis. Residues D246 and D248 each coordinate Mg(2+). The active-site Proton donor is the D248. A phosphoserine mark is found at S375 and S409. A Mg(2+)-binding site is contributed by D474.

Belongs to the HAD-like hydrolase superfamily. EYA family. As to quaternary structure, interacts with SIX1 and DACH1, and probably SIX2, SIX4 and SIX5. Mg(2+) serves as cofactor. Ser-203 phosphorylation is required for localization at sites of DNA damage and directing interaction with H2AX. Expressed in branchial arches, CNS and developing eye.

Its subcellular location is the cytoplasm. It is found in the nucleus. It catalyses the reaction O-phospho-L-tyrosyl-[protein] + H2O = L-tyrosyl-[protein] + phosphate. Functionally, tyrosine phosphatase that specifically dephosphorylates 'Tyr-142' of histone H2AX (H2AXY142ph). 'Tyr-142' phosphorylation of histone H2AX plays a central role in DNA repair and acts as a mark that distinguishes between apoptotic and repair responses to genotoxic stress. Promotes efficient DNA repair by dephosphorylating H2AX, promoting the recruitment of DNA repair complexes containing MDC1. Its function as histone phosphatase probably explains its role in transcription regulation during organogenesis. The phosphatase activity has been shown in vitro. Coactivates SIX1. Seems to coactivate SIX2, SIX4 and SIX5. The repression of precursor cell proliferation in myoblasts by SIX1 is switched to activation through recruitment of EYA3 to the SIX1-DACH1 complex and seems to be dependent on EYA3 phosphatase activity. May be involved in development of the eye. May play a role in mediating the induction and differentiation of cranial placodes. This Mus musculus (Mouse) protein is Protein phosphatase EYA3 (Eya3).